A 330-amino-acid polypeptide reads, in one-letter code: MIKPIYLIIIGTVICLVILYYFYHEISDSKKLLTSTYQKNMLLESKIFELERKSNVFIEKYDNLKNVRGQKNSSKIDSPVLSITYHSDMVKNGNLSVKYDEMGNTEVNELLQKINKNRDPKQLSNIHQPIPTKTSHNLVSKLEQDVGYKIPGTSSLLQNNCAQNIQKNTLHIDYPESINIPQNIKPNNIVVDNEFMMDENDEFNNPSKNLETEGDIFEVDMNNIFKNNKIKLLNNTDKKLSYSDSELMFGNDYQDILNSLPNDISDISANSLSSFDETVIKSISENLKNNIVSDSLSASIDVRKKVEDKITRVKNKSKISSKSRNSVVKK.

Residues 2-22 form a helical membrane-spanning segment; it reads IKPIYLIIIGTVICLVILYYF. N-linked (GlcNAc...) asparagine; by host glycosylation is found at N72, N94, N234, and N315.

Its subcellular location is the membrane. This is an uncharacterized protein from Acanthamoeba polyphaga mimivirus (APMV).